A 398-amino-acid chain; its full sequence is Nucleotide-sugar uncharacterized transporter 2 (398 aa).

The next 10 membrane-spanning stretches (helical) occupy residues 54 to 74 (FCGP…IILA), 84 to 104 (FNFP…LLAF), 119 to 139 (TTPF…SGLA), 150 to 170 (FYQM…FVLF), 179 to 199 (VMAL…DLEF), 201 to 221 (LFGA…KILW), 242 to 262 (FTVF…VLLF), 271 to 291 (AILI…LALG), 299 to 319 (VVLG…IFGS), and 322 to 342 (GFIS…YTWL).

Belongs to the TPT transporter family. TPT (TC 2.A.7.9) subfamily.

It is found in the membrane. In Arabidopsis thaliana (Mouse-ear cress), this protein is Nucleotide-sugar uncharacterized transporter 2.